Reading from the N-terminus, the 412-residue chain is Cinnamoyl-CoA:phenyllactate CoA-transferase (412 aa).

CoA is bound at residue Asn-102. The active-site Nucleophile is Asp-176.

In terms of assembly, homodimer. Part of the heterotrimeric phenyllactate dehydratase complex FldABC, composed of (R)-phenyllactate CoA-transferase (FldA) and a heterodimeric (R)-phenyllactyl-CoA dehydratase (FldB and FldC).

It catalyses the reaction (E)-cinnamoyl-CoA + (R)-3-phenyllactate = (R)-3-phenyllactoyl-CoA + (E)-cinnamate. It functions in the pathway amino-acid degradation; L-phenylalanine degradation. Its function is as follows. Component of the phenyllactate dehydratase complex FldABC that is involved in the fermentation of L-phenylalanine via a Stickland reaction. This complex catalyzes the reversible syn-dehydration of (R)-phenyllactate to (E)-cinnamate in two steps, a CoA-transfer from cinnamoyl-CoA to phenyllactate, catalyzed by FldA, followed by the dehydration of phenyllactyl-CoA to cinnamoyl-CoA, catalyzed by FldB and FldC. In vitro, FldA can use 3-phenylpropanoate as a better CoA-acceptor than phenyllactate. The polypeptide is Cinnamoyl-CoA:phenyllactate CoA-transferase (Clostridium sporogenes).